Here is a 231-residue protein sequence, read N- to C-terminus: Adenosylcobinamide-GDP ribazoletransferase (231 aa).

6 consecutive transmembrane segments (helical) span residues 24–44 (LWAFPLVALVSSALPTLILYL), 46–66 (LPLSNLLAVLALYWTIGLLHL), 96–116 (IAGLFAVVIVLLLQVYSLQLL), 159–176 (LALGTLLYVLLGLSVVLF), 181–198 (LAGILGLLFGVHIIRISL), and 209–229 (LGATAEITRAGTLVVMALVWW).

Belongs to the CobS family. It depends on Mg(2+) as a cofactor.

Its subcellular location is the cell membrane. The enzyme catalyses alpha-ribazole + adenosylcob(III)inamide-GDP = adenosylcob(III)alamin + GMP + H(+). It carries out the reaction alpha-ribazole 5'-phosphate + adenosylcob(III)inamide-GDP = adenosylcob(III)alamin 5'-phosphate + GMP + H(+). It participates in cofactor biosynthesis; adenosylcobalamin biosynthesis; adenosylcobalamin from cob(II)yrinate a,c-diamide: step 7/7. In terms of biological role, joins adenosylcobinamide-GDP and alpha-ribazole to generate adenosylcobalamin (Ado-cobalamin). Also synthesizes adenosylcobalamin 5'-phosphate from adenosylcobinamide-GDP and alpha-ribazole 5'-phosphate. This is Adenosylcobinamide-GDP ribazoletransferase from Thermococcus kodakarensis (strain ATCC BAA-918 / JCM 12380 / KOD1) (Pyrococcus kodakaraensis (strain KOD1)).